The following is a 236-amino-acid chain: 7-cyano-7-deazaguanine synthase (236 aa).

7 to 17 (CSGGLDSVSLA) is an ATP binding site. Residues cysteine 185, cysteine 193, cysteine 196, and cysteine 199 each coordinate Zn(2+).

Belongs to the QueC family. Zn(2+) serves as cofactor.

The enzyme catalyses 7-carboxy-7-deazaguanine + NH4(+) + ATP = 7-cyano-7-deazaguanine + ADP + phosphate + H2O + H(+). It participates in purine metabolism; 7-cyano-7-deazaguanine biosynthesis. Catalyzes the ATP-dependent conversion of 7-carboxy-7-deazaguanine (CDG) to 7-cyano-7-deazaguanine (preQ(0)). The sequence is that of 7-cyano-7-deazaguanine synthase from Rhizobium meliloti (strain 1021) (Ensifer meliloti).